The primary structure comprises 535 residues: Potassium channel subfamily K member 10 (535 aa).

Residues 1 to 68 (MYFSYIGYFF…GLQTVMKWKT (68 aa)) lie on the Cytoplasmic side of the membrane. Residues 69-89 (VVAIFVVVVVYLVTGGLVFRA) form a helical membrane-spanning segment. Residues 151-177 (LGSAFFFAGTVITTIGYGNIAPSTEGG) constitute an intramembrane region (pore-forming). 4 residues coordinate K(+): threonine 164, isoleucine 165, glycine 166, and tyrosine 167. Residues 164-169 (TIGYGN) form a selectivity filter 1 region. A helical transmembrane segment spans residues 179-199 (IFCILYAIFGIPLFGFLLAGI). Over 200-230 (GDQLGTIFGKSIARVEKVFRKKQVSQTKIRV) the chain is Cytoplasmic. Residues 231–251 (ISTILFILAGCIVFVTIPAVI) traverse the membrane as a helical segment. An intramembrane region (pore-forming) is located at residues 260–291 (ALESIYFVVVTLTTVGFGDFVAGGNAGINYRE). Residues threonine 273, valine 274, glycine 275, and phenylalanine 276 each coordinate K(+). A selectivity filter 2 region spans residues 273 to 278 (TVGFGD). A helical transmembrane segment spans residues 296 to 316 (LVWFWILVGLAYFAAVLSMIG). At 317-535 (DWLRVLSKKT…ENNSLLEDRN (219 aa)) the chain is on the cytoplasmic side. 2 disordered regions span residues 410-438 (QESI…ASED) and 510-535 (EMEN…EDRN). Residues 525–535 (LENNSLLEDRN) are compositionally biased toward polar residues.

Homodimer; disulfide-linked. Forms heterodimers with other 2-pore domain K(+) channel subunits, such as KCNK2, KCNK4 and KCNK18. As to expression, detected in dorsal root ganglia (DRG) neurons (at protein level).

The protein localises to the cell membrane. The catalysed reaction is K(+)(in) = K(+)(out). It catalyses the reaction Rb(+)(in) = Rb(+)(out). The enzyme catalyses Cs(+)(in) = Cs(+)(out). Its activity is regulated as follows. Activated by stimuli such as mechanical stretch, acidic pH and polyunsaturated free fatty acids. Activated by a dihydroacridine analog, ML67-33. Inhibited by polycationic dye ruthenium red. Selectively activated by T2A3 (2-[(4-chloro-3-methylphenyl)amino] benzoic acid). K(+) channel that conducts voltage-dependent outward rectifying currents upon membrane depolarization. Voltage sensing is coupled to K(+) electrochemical gradient in an 'ion flux gating' mode where outward but not inward ion flow opens the gate. Converts to voltage-independent 'leak' conductance mode upon stimulation by various stimuli including mechanical membrane stretch, acidic pH, heat and lipids. Homo- and heterodimerizes to form functional channels with distinct regulatory and gating properties. In trigeminal ganglia sensory neurons, the heterodimer of KCNK10/TREK-2 and KCNK18/TRESK inhibits neuronal firing and neurogenic inflammation by stabilizing the resting membrane potential at K(+) equilibrium potential as well as by regulating the threshold of action potentials and the spike frequency. Permeable to other monovalent ions such as Rb(+) and Cs(+). In Mus musculus (Mouse), this protein is Potassium channel subfamily K member 10.